The following is a 292-amino-acid chain: NAD kinase (292 aa).

D64 functions as the Proton acceptor in the catalytic mechanism. NAD(+) contacts are provided by residues 64–65 (DG), 138–139 (ND), R149, R166, D168, 179–184 (TGYAVS), and Q238.

Belongs to the NAD kinase family. The cofactor is a divalent metal cation.

The protein localises to the cytoplasm. The enzyme catalyses NAD(+) + ATP = ADP + NADP(+) + H(+). In terms of biological role, involved in the regulation of the intracellular balance of NAD and NADP, and is a key enzyme in the biosynthesis of NADP. Catalyzes specifically the phosphorylation on 2'-hydroxyl of the adenosine moiety of NAD to yield NADP. The chain is NAD kinase from Oleidesulfovibrio alaskensis (strain ATCC BAA-1058 / DSM 17464 / G20) (Desulfovibrio alaskensis).